The following is a 115-amino-acid chain: Large ribosomal subunit protein bL20 (115 aa).

It belongs to the bacterial ribosomal protein bL20 family.

Functionally, binds directly to 23S ribosomal RNA and is necessary for the in vitro assembly process of the 50S ribosomal subunit. It is not involved in the protein synthesizing functions of that subunit. The protein is Large ribosomal subunit protein bL20 of Chlorobium chlorochromatii (strain CaD3).